Consider the following 137-residue polypeptide: uncharacterized protein (137 aa).

Positions 58 to 135 (VHVVAKTVRP…EVNLQMFLMN (78 aa)) constitute a Ubiquitin-like domain.

The protein resides in the cytoplasm. It is found in the nucleus. This is an uncharacterized protein from Schizosaccharomyces pombe (strain 972 / ATCC 24843) (Fission yeast).